The sequence spans 347 residues: Inosamine-phosphate amidinotransferase 1 (347 aa).

Active-site residues include D179 and H227. Catalysis depends on C332, which acts as the Amidino-cysteine intermediate.

Belongs to the amidinotransferase family. In terms of assembly, homodimer.

The catalysed reaction is 1-amino-1-deoxy-scyllo-inositol 4-phosphate + L-arginine = 1-guanidino-1-deoxy-scyllo-inositol 4-phosphate + L-ornithine. It participates in antibiotic biosynthesis; streptomycin biosynthesis. In terms of biological role, catalyzes two non-consecutive transamidination reactions. It converts scyllo-inosamine 4-phosphate into N-amidino-scyllo-inosamine 4-phosphate and N1-amidinostreptamine 6-phosphate into streptidine 6-phosphate. The polypeptide is Inosamine-phosphate amidinotransferase 1 (strB1) (Streptomyces griseus).